Here is a 156-residue protein sequence, read N- to C-terminus: MPRVPITKEGFERLKIELQRLQRDERPMVIRAIEEARSHGDISENAEYEAAKEKQAMIEGRIQDLCQKMGECEIVEPSDNDNGRAIFGSTVVVEDTETGEVTSYRLVGPYEADVQSGTISVVSPLGKALIGKEEGEEIRVQTPKGVRNIEVLEIRN.

Positions 44 to 67 (ENAEYEAAKEKQAMIEGRIQDLCQ) form a coiled coil.

The protein belongs to the GreA/GreB family.

Functionally, necessary for efficient RNA polymerase transcription elongation past template-encoded arresting sites. The arresting sites in DNA have the property of trapping a certain fraction of elongating RNA polymerases that pass through, resulting in locked ternary complexes. Cleavage of the nascent transcript by cleavage factors such as GreA or GreB allows the resumption of elongation from the new 3'terminus. GreA releases sequences of 2 to 3 nucleotides. This chain is Transcription elongation factor GreA, found in Syntrophobacter fumaroxidans (strain DSM 10017 / MPOB).